Reading from the N-terminus, the 298-residue chain is Foldase protein PrsA 1 (298 aa).

The first 23 residues, 1–23 (MNKTWKKAATVLAFAGIALSATA), serve as a signal peptide directing secretion. The N-palmitoyl cysteine moiety is linked to residue Cys-24. Cys-24 carries the S-diacylglycerol cysteine lipid modification. The PpiC domain occupies 141–234 (QPEVTVQHIL…YGYHVIKMIK (94 aa)).

It belongs to the PrsA family.

Its subcellular location is the cell membrane. It carries out the reaction [protein]-peptidylproline (omega=180) = [protein]-peptidylproline (omega=0). Functionally, plays a major role in protein secretion by helping the post-translocational extracellular folding of several secreted proteins. This Lactobacillus johnsonii (strain CNCM I-12250 / La1 / NCC 533) protein is Foldase protein PrsA 1 (prsA1).